The primary structure comprises 101 residues: Small ribosomal subunit protein uS14 (101 aa).

The protein belongs to the universal ribosomal protein uS14 family. Part of the 30S ribosomal subunit. Contacts proteins S3 and S10.

Its function is as follows. Binds 16S rRNA, required for the assembly of 30S particles and may also be responsible for determining the conformation of the 16S rRNA at the A site. This is Small ribosomal subunit protein uS14 from Methylococcus capsulatus (strain ATCC 33009 / NCIMB 11132 / Bath).